The sequence spans 407 residues: Frizzled/smoothened-like sans CRD protein J (407 aa).

An N-terminal signal peptide occupies residues 1–23 (MKFLFSVILVIISFLGISKIVNG). Topologically, residues 24 to 89 (QIACPSPFLY…WNSFNKLVKQ (66 aa)) are extracellular. N37 carries an N-linked (GlcNAc...) asparagine glycan. The chain crosses the membrane as a helical span at residues 90-110 (MGAVAFTCSAIIMIIYGPLMN). The Cytoplasmic portion of the chain corresponds to 111–120 (RSFFKFDRHT). A helical transmembrane segment spans residues 121–141 (ITVFCFALSTFFIGVSDLMFA). Over 142 to 169 (TNDVDMVCPESHRYARQTDKTCATNGVL) the chain is Extracellular. Residues 170–190 (FQFGWLGSVMWFAFLSIDGFF) traverse the membrane as a helical segment. At 191 to 199 (RASGKKMNK) the chain is on the cytoplasmic side. A helical transmembrane segment spans residues 200–220 (IAFAIVLASIWILNIVLSFAP). The Extracellular portion of the chain corresponds to 221 to 246 (MGGDQYGAYFVGQVNCWILVKNWQYA). Residues 247–267 (FFWAELIVSLAIGFVGICLTI) traverse the membrane as a helical segment. Residues 268–285 (YSLIRKTSDGNTLKHVTP) lie on the Cytoplasmic side of the membrane. The chain crosses the membrane as a helical span at residues 286–306 (LILVFLLFCQYLYMIIFYGII). The Extracellular segment spans residues 307–354 (NEKKDHYQNILAEQVGCIFNNALAKMKVPGIVYAGECTFNETITFSSQ). N-linked (GlcNAc...) asparagine glycosylation is present at N346. A helical transmembrane segment spans residues 355-375 (YAFLFFVRLLGIEIFAFYLFS). Residues 376–407 (KETLLLIKSSYIATMFGLGDKDAYDVELEETD) are Cytoplasmic-facing.

The protein belongs to the G-protein coupled receptor Fz/Smo family.

Its subcellular location is the membrane. The protein is Frizzled/smoothened-like sans CRD protein J (fscJ) of Dictyostelium discoideum (Social amoeba).